The chain runs to 130 residues: Small ribosomal subunit protein uS8 (130 aa).

Belongs to the universal ribosomal protein uS8 family. In terms of assembly, part of the 30S ribosomal subunit. Contacts proteins S5 and S12.

One of the primary rRNA binding proteins, it binds directly to 16S rRNA central domain where it helps coordinate assembly of the platform of the 30S subunit. This chain is Small ribosomal subunit protein uS8, found in Actinobacillus succinogenes (strain ATCC 55618 / DSM 22257 / CCUG 43843 / 130Z).